The following is an 822-amino-acid chain: Pentatricopeptide repeat-containing protein At2g18940, chloroplastic (822 aa).

Residues 1-42 (MDGALFPHKPPYPIQSKRPPPSQSSNQSIKFSSATLHLPPPS) are disordered. The transit peptide at 1–77 (MDGALFPHKP…SAAARFPSLE (77 aa)) directs the protein to the chloroplast. The span at 8–22 (HKPPYPIQSKRPPPS) shows a compositional bias: pro residues. Low complexity predominate over residues 23–37 (QSSNQSIKFSSATLH). 17 PPR repeats span residues 209-243 (DVRA…GPSP), 244-279 (TLVT…GLKF), 280-314 (DEFT…GYEP), 315-349 (GTVT…SCPA), 350-384 (DSVT…GVMP), 385-419 (NAIT…GCVP), 420-454 (NTCT…GCSP), 455-489 (NRAT…GFEP), 490-524 (DRDT…GFNA), 525-559 (CVTT…GFKP), 560-594 (TETS…QIFP), 595-629 (SWML…GYKP), 630-664 (DMVI…GLSP), 665-699 (DLVT…QLKP), 700-734 (DLVS…GIRP), 735-769 (CIFT…DCRP), and 770-800 (NELT…IKTF).

The protein belongs to the PPR family. P subfamily.

The protein resides in the plastid. The protein localises to the chloroplast. This chain is Pentatricopeptide repeat-containing protein At2g18940, chloroplastic, found in Arabidopsis thaliana (Mouse-ear cress).